The primary structure comprises 487 residues: Sensor protein CseC (487 aa).

Positions 1–11 (MRGNLRRPGPA) are enriched in low complexity. The tract at residues 1–41 (MRGNLRRPGPAGTAGPGRTGIRTSADGGRARPRTGAGTGVR) is disordered. 2 helical membrane passes run 63-83 (ISAAIALVGALVALALSLVVH) and 185-205 (ALIIGSIAVVFGGSALGVLIG). In terms of domain architecture, HAMP spans 206–262 (GQLSRRLRKAAAAANQVAQGERDVRVRDAIGGVVRDETDDLARAVDAMADALQQRIE). The 203-residue stretch at 270–472 (DIAHELRTPV…VAVLWLPEHA (203 aa)) folds into the Histidine kinase domain. His273 is subject to Phosphohistidine; by autocatalysis.

The protein resides in the cell membrane. It catalyses the reaction ATP + protein L-histidine = ADP + protein N-phospho-L-histidine.. The chain is Sensor protein CseC (cseC) from Streptomyces avermitilis (strain ATCC 31267 / DSM 46492 / JCM 5070 / NBRC 14893 / NCIMB 12804 / NRRL 8165 / MA-4680).